The following is a 163-amino-acid chain: Transcriptional repressor NrdR (163 aa).

Residues 3 to 34 (CPFCAHPEDKVVDSRESKEGESIRRRRECLKC) fold into a zinc finger. The ATP-cone domain maps to 49–139 (YMVVKKDGRR…VYLDFKDVRE (91 aa)).

The protein belongs to the NrdR family. The cofactor is Zn(2+).

In terms of biological role, negatively regulates transcription of bacterial ribonucleotide reductase nrd genes and operons by binding to NrdR-boxes. The polypeptide is Transcriptional repressor NrdR (Koribacter versatilis (strain Ellin345)).